The chain runs to 371 residues: Bifunctional enzyme IspD/IspF (371 aa).

The tract at residues 1–210 is 2-C-methyl-D-erythritol 4-phosphate cytidylyltransferase; sequence MLDISLIMLS…LNLPKPSWDI (210 aa). The segment at 211–371 is 2-C-methyl-D-erythritol 2,4-cyclodiphosphate synthase; it reads FNGNGFDVHE…NLKYFDWMKL (161 aa). 2 residues coordinate a divalent metal cation: aspartate 217 and histidine 219. Residues 217–219 and 243–244 each bind 4-CDP-2-C-methyl-D-erythritol 2-phosphate; these read DVH and HS. Position 251 (histidine 251) interacts with a divalent metal cation. Residues 265–267, 270–274, 341–344, phenylalanine 348, and arginine 351 each bind 4-CDP-2-C-methyl-D-erythritol 2-phosphate; these read DIG, FPDND, and TTTE.

This sequence in the N-terminal section; belongs to the IspD/TarI cytidylyltransferase family. IspD subfamily. The protein in the C-terminal section; belongs to the IspF family. Requires a divalent metal cation as cofactor.

It catalyses the reaction 2-C-methyl-D-erythritol 4-phosphate + CTP + H(+) = 4-CDP-2-C-methyl-D-erythritol + diphosphate. It carries out the reaction 4-CDP-2-C-methyl-D-erythritol 2-phosphate = 2-C-methyl-D-erythritol 2,4-cyclic diphosphate + CMP. It participates in isoprenoid biosynthesis; isopentenyl diphosphate biosynthesis via DXP pathway; isopentenyl diphosphate from 1-deoxy-D-xylulose 5-phosphate: step 2/6. It functions in the pathway isoprenoid biosynthesis; isopentenyl diphosphate biosynthesis via DXP pathway; isopentenyl diphosphate from 1-deoxy-D-xylulose 5-phosphate: step 4/6. Its function is as follows. Bifunctional enzyme that catalyzes the formation of 4-diphosphocytidyl-2-C-methyl-D-erythritol from CTP and 2-C-methyl-D-erythritol 4-phosphate (MEP) (IspD), and catalyzes the conversion of 4-diphosphocytidyl-2-C-methyl-D-erythritol 2-phosphate (CDP-ME2P) to 2-C-methyl-D-erythritol 2,4-cyclodiphosphate (ME-CPP) with a corresponding release of cytidine 5-monophosphate (CMP) (IspF). The protein is Bifunctional enzyme IspD/IspF of Campylobacter lari (strain RM2100 / D67 / ATCC BAA-1060).